A 22-amino-acid chain; its full sequence is Thylakoid lumenal 11 kDa protein (22 aa).

Residues 1–22 form a disordered region; the sequence is FKGGGPYGQGVTRGQDLSGKDF.

It to A.thaliana At2g44920.

Its subcellular location is the plastid. The protein resides in the chloroplast thylakoid lumen. The polypeptide is Thylakoid lumenal 11 kDa protein (Spinacia oleracea (Spinach)).